Consider the following 224-residue polypeptide: Pre-hexon-linking protein VIII (224 aa).

Thr64 carries the post-translational modification Phosphothreonine; by host. The propeptide occupies 112 to 154 (RQLCPSQIGIKSPVLAGTGIQLSEDIPSASWIRPDGIFQLGGG).

This sequence belongs to the adenoviridae hexon-linking protein family. Interacts with the peripentonal hexons as well as the hexons in the facets. Part of a complex composed of the core-capsid bridging protein, the endosome lysis protein VI and the hexon-linking protein VIII; these interactions bridge the virus core to the capsid. Post-translationally, cleaved by the viral protease during virion maturation. May cause the middle segment to be shed from the capsid.

It is found in the virion. The protein localises to the host nucleus. Its function is as follows. Structural component of the virion that acts as a cement protein on the capsid interior and which glue the peripentonal hexons and group-of-nine hexons together. In Canis lupus familiaris (Dog), this protein is Pre-hexon-linking protein VIII.